The chain runs to 609 residues: UvrABC system protein C (609 aa).

Positions 15-92 constitute a GIY-YIG domain; sequence TGSGVYQMQD…IKQFRPRYNV (78 aa). The region spanning 202–237 is the UVR domain; sequence DQVIIKLTERMEVASENLVFEEAAHYRDQIRQLRRL.

This sequence belongs to the UvrC family. As to quaternary structure, interacts with UvrB in an incision complex.

The protein localises to the cytoplasm. In terms of biological role, the UvrABC repair system catalyzes the recognition and processing of DNA lesions. UvrC both incises the 5' and 3' sides of the lesion. The N-terminal half is responsible for the 3' incision and the C-terminal half is responsible for the 5' incision. The protein is UvrABC system protein C of Coxiella burnetii (strain CbuK_Q154) (Coxiella burnetii (strain Q154)).